The primary structure comprises 80 residues: UPF0270 protein ASA_3305 (80 aa).

This sequence belongs to the UPF0270 family.

This Aeromonas salmonicida (strain A449) protein is UPF0270 protein ASA_3305.